The chain runs to 367 residues: Cystinosin (367 aa).

An N-terminal signal peptide occupies residues 1–22; that stretch reads MIRNWLTIFILFPLKLVEKCES. Residues 23-125 are Lumenal-facing; it reads SVSLTVPPVV…LVIRSSAISI (103 aa). Residues Asn36, Asn41, and Asn51 are each glycosylated (N-linked (GlcNAc...) (high mannose) asparagine). The N-linked (GlcNAc...) asparagine glycan is linked to Asn66. Asn84, Asn104, and Asn107 each carry an N-linked (GlcNAc...) (high mannose) asparagine glycan. One can recognise a PQ-loop 1 domain in the interval 123–189; the sequence is ISIINQVIGW…LLWVPYIKEQ (67 aa). Residues 126–150 form a helical membrane-spanning segment; that stretch reads INQVIGWIYFVAWSISFYPQVIMNW. The Cytoplasmic portion of the chain corresponds to 151–159; it reads RRKSVIGLS. A helical membrane pass occupies residues 160-179; that stretch reads FDFVALNLTGFVAYSVFNIG. Asn166 contacts L-cystine. Residues 180–202 are Lumenal-facing; that stretch reads LLWVPYIKEQFLLKYPNGVNPVN. The chain crosses the membrane as a helical span at residues 203–225; sequence SNDVFFSLHAVVLTLIIIVQCCL. Position 205 (Asp205) interacts with H(+). Over 226–234 the chain is Cytoplasmic; that stretch reads YERGGQRVS. A helical transmembrane segment spans residues 235 to 257; that stretch reads WPAIGFLVLAWLFAFVTMIVAAV. The Lumenal segment spans residues 258 to 263; that stretch reads GVTTWL. Residues 263–328 enclose the PQ-loop 2 domain; the sequence is LQFLFCFSYI…QSYNNDQWTL (66 aa). The helical transmembrane segment at 264–289 threads the bilayer; the sequence is QFLFCFSYIKLAVTLVKYFPQAYMNF. Positions 273, 280, and 281 each coordinate L-cystine. Residues 290–298 lie on the Cytoplasmic side of the membrane; that stretch reads YYKSTEGWS. A helical transmembrane segment spans residues 299-308; it reads IGNVLLDFTG. Asn301 and Asp305 together coordinate L-cystine. Residue Asp305 coordinates H(+). The Lumenal segment spans residues 309–331; sequence GSFSLLQMFLQSYNNDQWTLIFG. The helical transmembrane segment at 332–354 threads the bilayer; that stretch reads DPTKFGLGVFSIVFDVVFFIQHF. Asp346 provides a ligand contact to H(+). Topologically, residues 355-367 are cytoplasmic; sequence CLYRKRPGYDQLN. The Lysosomal targeting motif motif lies at 362–366; the sequence is GYDQL.

It belongs to the cystinosin family. In terms of assembly, interacts with components of the V-ATPase complex. Interacts with components of the Ragulator complex. Interacts with RRAGA/RagA and RRAGC/RagC. Interacts with AP-3 complex subunit mu (AP3M1 or AP3M2). Strongly expressed in pancreas, kidney (adult and fetal), skeletal muscle, melanocytes and keratinocytes. Expressed at lower levels in placenta and heart. Weakly expressed in lung, liver and brain (adult and fetal). As to expression, represents 5-20 % of CTNS transcripts, with the exception of the testis that expresses both isoforms in equal proportions.

It localises to the lysosome membrane. The protein localises to the melanosome membrane. The protein resides in the cell membrane. It catalyses the reaction L-cystine(out) + H(+)(out) = L-cystine(in) + H(+)(in). Switches between a lumen- and a cytosol-open conformation: pH induces conformational changes and shifts the equilibrium to facilitate the transition between the lumen- and cytosol-open conformation, thereby promoting cystine transport. Protonation of specific aspartate residues (Asp-205, Asp-305 and Asp-346) favors the cytosol-open conformation. Functionally, cystine/H(+) symporter that mediates export of cystine, the oxidized dimer of cysteine, from lysosomes. Plays an important role in melanin synthesis by catalyzing cystine export from melanosomes, possibly by inhibiting pheomelanin synthesis. In addition to cystine export, also acts as a positive regulator of mTORC1 signaling in kidney proximal tubular cells, via interactions with components of the v-ATPase and Ragulator complexes. Also involved in small GTPase-regulated vesicle trafficking and lysosomal localization of LAMP2A, independently of cystine transporter activity. This is Cystinosin from Homo sapiens (Human).